The chain runs to 130 residues: Small ribosomal subunit protein uS9 (130 aa).

Belongs to the universal ribosomal protein uS9 family.

The sequence is that of Small ribosomal subunit protein uS9 from Streptococcus equi subsp. zooepidemicus (strain H70).